A 440-amino-acid polypeptide reads, in one-letter code: MFLAQEIIRKKRDGHALSDEEIRFFINGIRDNTISEGQIAALAMTIFFHDMTMPERVSLTMAMRDSGTVLDWKSLNLNGPIVDKHSTGGVGDVTSLMLGPMVAACGGYVPMISGRGLGHTGGTLDKLEAIPGFDIFPDDNRFREIIQDVGVAIIGQTSSLAPADKRFYATRDITATVDSIPLITGSILAKKLAEGLDALVMDVKVGSGAFMPTYELSEALAEAIVGVANGAGVRTTALLTDMNQVLASSAGNAVEVREAVQFLTGEYRNPRLFDVTMALCVEMLISGNLAKDDAEARAKLQAVLDNGKAAEVFGRMVAAQKGPSDFVENYDKYLPTAMLSKAVYADTEGFISAMDTRALGMAVVSMGGGRRQASDTIDYSVGFTDMARLGDSIDGQRPLAVIHAKDEASWQEAAKAVKAAIILDDKAPASTPSVYRRITE.

Belongs to the thymidine/pyrimidine-nucleoside phosphorylase family. As to quaternary structure, homodimer.

It catalyses the reaction thymidine + phosphate = 2-deoxy-alpha-D-ribose 1-phosphate + thymine. Its pathway is pyrimidine metabolism; dTMP biosynthesis via salvage pathway; dTMP from thymine: step 1/2. The enzymes which catalyze the reversible phosphorolysis of pyrimidine nucleosides are involved in the degradation of these compounds and in their utilization as carbon and energy sources, or in the rescue of pyrimidine bases for nucleotide synthesis. The sequence is that of Thymidine phosphorylase from Salmonella paratyphi A (strain ATCC 9150 / SARB42).